A 199-amino-acid polypeptide reads, in one-letter code: Photosystem I reaction center subunit XI (199 aa).

A run of 2 helical transmembrane segments spans residues 108–128 (ITAG…LLVL) and 165–185 (FWLG…TLHL).

This sequence belongs to the PsaL family.

The protein resides in the cellular thylakoid membrane. In Prochlorococcus marinus (strain MIT 9515), this protein is Photosystem I reaction center subunit XI.